Here is a 549-residue protein sequence, read N- to C-terminus: Protein EPD2 (549 aa).

Positions 1–20 are cleaved as a signal peptide; it reads MISVIKSLLTLSVLSTLAAA. N-linked (GlcNAc...) asparagine glycosylation is present at Asn41. The cysteines at positions 82 and 111 are disulfide-linked. Residues Asn173 and Asn261 are each glycosylated (N-linked (GlcNAc...) asparagine). 5 disulfides stabilise this stretch: Cys224/Cys358, Cys242/Cys273, Cys381/Cys432, Cys390/Cys456, and Cys409/Cys414. Residue Asn467 is glycosylated (N-linked (GlcNAc...) asparagine). Residues 470–518 form a disordered region; the sequence is ASTSCSAAGGRGLQSGRRSSTTRGGSSSSRSSSSSSSSSTGSGSSNAGI. The span at 484-514 shows a compositional bias: low complexity; sequence SGRRSSTTRGGSSSSRSSSSSSSSSTGSGSS.

This sequence belongs to the glycosyl hydrolase 72 family.

It localises to the cell membrane. The sequence is that of Protein EPD2 (EPD2) from Candida maltosa (Yeast).